The following is a 483-amino-acid chain: Regulatory protein ViaA (483 aa).

This sequence belongs to the ViaA family. As to quaternary structure, homodimer. Interacts with RavA.

The protein localises to the cytoplasm. Its function is as follows. Component of the RavA-ViaA chaperone complex, which may act on the membrane to optimize the function of some of the respiratory chains. ViaA stimulates the ATPase activity of RavA. The polypeptide is Regulatory protein ViaA (Escherichia coli O1:K1 / APEC).